Consider the following 609-residue polypeptide: MSNEFNAQSFLRTVSSSAGVYRMYDVKNDVIYVGKAKDLKKRLTSYFRKNLANVKTQALVSHIHHIDVTLTHSETDALLLENDYIKQYMPKYNVLLRDDKSYPYILLSQHEHPRLAYHRGPQREKGHYFGPYPNGGAVRESLHLMQKLFPIRQCDDLYYKSRSRPCLQYQISRCSAPCVGKVSNADYDEQVKLASLFLKGKDQQVISALVDKMELAAERQAYEQAARFRDQIMALRKVAEQQEVSNNKGDMDVIGVHYSSGIACFHLLFIREGKIFGSRSYYPSVPAQTDMDEVLRSFILQFYLNADIQRTIPKEVVISHNFEELHELEAAISEALDKKFSIKTNVRADRASFLRLAVTNATNAVVTRLSHKNTVEQRFVLLEEILELSTPIQRMECFDISHTMGESTVASCVVFNREGPHKGEYRRYNIEGITPGDDYAAMKQAVSRRFDKIEAGGKIPDILFIDGGLGQLRIAQKIVDEKFVHLDKAPQLIGVAKGEGRKPGLETLILGDTETSFSLEGDSPALHLIQHIRDESHRFAITGHRNRRQKTRNTSTLESIPGIGPKRRKALLQHLGGLQEVKGASVAELVKVPGISIEMAQTIHDALRG.

A GIY-YIG domain is found at 16-94; it reads SSAGVYRMYD…IKQYMPKYNV (79 aa). Positions 203–238 constitute a UVR domain; the sequence is QQVISALVDKMELAAERQAYEQAARFRDQIMALRKV.

It belongs to the UvrC family. In terms of assembly, interacts with UvrB in an incision complex.

It is found in the cytoplasm. In terms of biological role, the UvrABC repair system catalyzes the recognition and processing of DNA lesions. UvrC both incises the 5' and 3' sides of the lesion. The N-terminal half is responsible for the 3' incision and the C-terminal half is responsible for the 5' incision. The polypeptide is UvrABC system protein C (Shewanella baltica (strain OS195)).